Reading from the N-terminus, the 198-residue chain is Putative pseudouridine methyltransferase (198 aa).

2 residues coordinate S-adenosyl-L-methionine: M132 and C186.

Belongs to the methyltransferase superfamily. TrmY family.

It localises to the cytoplasm. This Photobacterium profundum (strain SS9) protein is Putative pseudouridine methyltransferase.